We begin with the raw amino-acid sequence, 547 residues long: GMP synthase [glutamine-hydrolyzing] (547 aa).

A Glutamine amidotransferase type-1 domain is found at 12-210 (KILILDFGSQ…VLDIAGAKPD (199 aa)). Cys-89 (nucleophile) is an active-site residue. Catalysis depends on residues His-184 and Glu-186. In terms of domain architecture, GMPS ATP-PPase spans 211-403 (WIMRDHIEEA…LGLPAEMVYR (193 aa)). 238-244 (SGGVDSS) is an ATP binding site.

Homodimer.

The catalysed reaction is XMP + L-glutamine + ATP + H2O = GMP + L-glutamate + AMP + diphosphate + 2 H(+). It functions in the pathway purine metabolism; GMP biosynthesis; GMP from XMP (L-Gln route): step 1/1. In terms of biological role, catalyzes the synthesis of GMP from XMP. The chain is GMP synthase [glutamine-hydrolyzing] from Burkholderia pseudomallei (strain 1710b).